Consider the following 96-residue polypeptide: Mapk-regulated corepressor-interacting protein 1 (96 aa).

2 disordered regions span residues 1–28 (MASSPVSRVVYNGKRSGGPRSPGAGSEI) and 76–96 (AFKPVDLSDLKRRNTQDAKKS). Residues 79–83 (PVDLS) carry the PXDLS motif motif. The segment covering 81–96 (DLSDLKRRNTQDAKKS) has biased composition (basic and acidic residues).

It belongs to the MCRIP family.

It localises to the nucleus. It is found in the cytoplasm. The protein resides in the stress granule. May play a role in the regulation of the epithelial-mesenchymal transition. This Gallus gallus (Chicken) protein is Mapk-regulated corepressor-interacting protein 1 (MCRIP1).